A 372-amino-acid chain; its full sequence is F-box/kelch-repeat protein At2g44630 (372 aa).

Residues 1–13 are compositionally biased toward polar residues; that stretch reads MSNADEPPQKTNQ. Positions 1-21 are disordered; that stretch reads MSNADEPPQKTNQPPSSSLTP. In terms of domain architecture, F-box spans 21–67; sequence PPSLFSLPVDIVLNILALVPKRYYPILCCVSKSLRSLIRSPEIHKTR. Kelch repeat units follow at residues 136–181 and 183–228; these read EIYC…LVGG and IYVI…SVSL.

This Arabidopsis thaliana (Mouse-ear cress) protein is F-box/kelch-repeat protein At2g44630.